The primary structure comprises 479 residues: MVGRSRRRGAAKWAAVRAKAGPTLTDENGDDLGLPPSPGDTSYYQDQVDDFHEARSRAALAKGWNEVQSGDEEDGEEEEEEVLALDMDDEDDEDGGNAGEEEEEENADDDGGSSVQSEAEASVDPSLSWGQRKKLYYDTDYGSKSRGRQSQQEAEEEEREEEEEAQIIQRRLAQALQEDDFGVAWVEAFAKPVPQVDEAETRVVKDLAKVSVKEKLKMLRKESPELLELIEDLKVKLTEVKDELEPLLELVEQGIIPPGKGSQYLRTKYNLYLNYCSNISFYLILKARRVPAHGHPVIERLVTYRNLINKLSVVDQKLSSEIRHLLTLKDDAVKKELIPKAKSTKPKPKSVSKTSAAACAVTDLSDDSDFDEKAKLKYYKEIEDRQKLKRKKEENSTEEQALEDQNAKRAITYQIAKNRGLTPRRKKIDRNPRVKHREKFRRAKIRRRGQVREVRKEEQRYSGELSGIRAGVKKSIKLK.

Basic residues predominate over residues methionine 1–alanine 10. 2 disordered regions span residues methionine 1–glutamine 45 and lysine 62–glutamine 166. Arginine 8 bears the Omega-N-methylarginine mark. The span at alanine 11–glycine 21 shows a compositional bias: low complexity. A Phosphoserine modification is found at serine 37. Acidic residues predominate over residues serine 69–glycine 111. Lysine 144 is subject to N6-acetyllysine; alternate. Residue lysine 144 forms a Glycyl lysine isopeptide (Lys-Gly) (interchain with G-Cter in SUMO2); alternate linkage. Phosphoserine is present on serine 150. Acidic residues predominate over residues glutamate 153–alanine 165. The residue at position 362 (threonine 362) is a Phosphothreonine. Phosphoserine occurs at positions 365 and 368. Arginine 385 carries the citrulline modification. The disordered stretch occupies residues arginine 419–serine 466. A compositionally biased stretch (basic residues) spans threonine 422–glycine 449. Positions glutamine 450–tyrosine 461 are enriched in basic and acidic residues.

Belongs to the SAS10 family. Part of the small subunit (SSU) processome, composed of more than 70 proteins and the RNA chaperone small nucleolar RNA (snoRNA) U3. Post-translationally, citrullinated by PADI4.

It is found in the nucleus. Its subcellular location is the nucleolus. In terms of biological role, essential for gene silencing: has a role in the structure of silenced chromatin. Plays a role in the developing brain. Part of the small subunit (SSU) processome, first precursor of the small eukaryotic ribosomal subunit. During the assembly of the SSU processome in the nucleolus, many ribosome biogenesis factors, an RNA chaperone and ribosomal proteins associate with the nascent pre-rRNA and work in concert to generate RNA folding, modifications, rearrangements and cleavage as well as targeted degradation of pre-ribosomal RNA by the RNA exosome. The chain is Something about silencing protein 10 from Homo sapiens (Human).